Here is a 135-residue protein sequence, read N- to C-terminus: Lysozyme 2 (135 aa).

The first 18 residues, Met1 to Ser18, serve as a signal peptide directing secretion. The 117-residue stretch at Ser19–Ser135 folds into the I-type lysozyme domain. 6 disulfides stabilise this stretch: Cys24–Cys100, Cys29–Cys35, Cys40–Cys49, Cys62–Cys82, Cys72–Cys78, and Cys96–Cys114. Glu32 functions as the Proton donor in the catalytic mechanism. Asp43 functions as the Nucleophile in the catalytic mechanism. Lys55–Asp61 provides a ligand contact to substrate. Residues Tyr86 and His107 to Gly109 contribute to the substrate site.

As to expression, expressed in the epithelia of the basophil cells in the digestive tubules, but not in the epithelial cells lining the digestive ducts and stomach. Expressed at a much lower level in the style sac-midgut tissues. No expression detected in mantle, gills, labial palps or hemocytes.

The protein resides in the secreted. The enzyme catalyses Hydrolysis of (1-&gt;4)-beta-linkages between N-acetylmuramic acid and N-acetyl-D-glucosamine residues in a peptidoglycan and between N-acetyl-D-glucosamine residues in chitodextrins.. Activity decreased by 80% by addition of 0.01 M calcium, zinc or magnesium. Activity only decreased by 17% by addition of ammonium, and by 2% by addition of sodium. The main role of this lysozyme is in digestion. Has antibacterial activity against the Gram-positive bacterium P.cerevisiae and the Gram-negative bacteria E.coli and V.vulnificus. Shows some chitinase activity but no isopeptidase activity. This is Lysozyme 2 from Crassostrea virginica (Eastern oyster).